The sequence spans 622 residues: TAF6-like RNA polymerase II p300/CBP-associated factor-associated factor 65 kDa subunit 6L (622 aa).

2 disordered regions span residues 403-430 and 457-546; these read QESS…GPED and GTGQ…TRDV. Phosphoserine is present on residues S495 and S501. Low complexity predominate over residues 511 to 522; the sequence is ASASGPAASESR. Residues R555, R561, and R593 each carry the asymmetric dimethylarginine modification.

This sequence belongs to the TAF6 family. In terms of assembly, the PCAF complex is composed of a number of TBP-associated factors (TAFS), such as TAF5, TAF5L, TAF6, TAF6L, TAF9, TAF10 and TAF12, PCAF, and also PCAF-associated factors (PAFs), such as TADA2L/ADA2, TADA3L/ADA3 and SPT3. Component of the STAGA transcription coactivator-HAT complex, at least composed of SUPT3H, GCN5L2, TAF5L, TAF6L, SUPT7L, TADA3L, TAD1L, TAF10, TAF12, TRRAP and TAF9.

It is found in the nucleus. Its function is as follows. Functions as a component of the PCAF complex. The PCAF complex is capable of efficiently acetylating histones in a nucleosomal context. The PCAF complex could be considered as the human version of the yeast SAGA complex. With TAF5L, acts as an epigenetic regulator essential for somatic reprogramming. Regulates target genes through H3K9ac deposition and MYC recruitment which trigger MYC regulatory network to orchestrate gene expression programs to control embryonic stem cell state. Functions with MYC to activate target gene expression through RNA polymerase II pause release. In Homo sapiens (Human), this protein is TAF6-like RNA polymerase II p300/CBP-associated factor-associated factor 65 kDa subunit 6L.